A 91-amino-acid chain; its full sequence is Class I hydrophobin E (91 aa).

The signal sequence occupies residues 1 to 16 (MKFSIAAIALAAVAVA). 4 cysteine pairs are disulfide-bonded: Cys30–Cys72, Cys42–Cys64, Cys43–Cys55, and Cys73–Cys89. Asn83 carries N-linked (GlcNAc...) asparagine glycosylation.

The protein belongs to the fungal hydrophobin family.

Its subcellular location is the secreted. The protein resides in the cell wall. The protein localises to the vacuole. It is found in the cytoplasmic vesicle. Functionally, aerial growth, conidiation, and dispersal of filamentous fungi in the environment rely upon a capability of their secreting small amphipathic proteins called hydrophobins (HPBs) with low sequence identity. Class I can self-assemble into an outermost layer of rodlet bundles on aerial cell surfaces, conferring cellular hydrophobicity that supports fungal growth, development and dispersal; whereas Class II form highly ordered films at water-air interfaces through intermolecular interactions but contribute nothing to the rodlet structure. Hyd1E contributes to certain cell wall-related features, such as hydrophobicity but is not involved in cell wall-related events during fungal proliferation in host hemocoel. Does not contribute to conidial hydrophobicity. The protein is Class I hydrophobin E of Beauveria bassiana (strain ARSEF 2860) (White muscardine disease fungus).